We begin with the raw amino-acid sequence, 146 residues long: FAD synthase (146 aa).

ATP contacts are provided by residues 9–10 (TF), 14–17 (HPGH), and Asp-92.

It belongs to the archaeal FAD synthase family. Homodimer. A divalent metal cation serves as cofactor.

It catalyses the reaction FMN + ATP + H(+) = FAD + diphosphate. It functions in the pathway cofactor biosynthesis; FAD biosynthesis; FAD from FMN: step 1/1. Catalyzes the transfer of the AMP portion of ATP to flavin mononucleotide (FMN) to produce flavin adenine dinucleotide (FAD) coenzyme. The protein is FAD synthase of Halobacterium salinarum (strain ATCC 29341 / DSM 671 / R1).